Consider the following 610-residue polypeptide: UvrABC system protein C (610 aa).

A GIY-YIG domain is found at 16-94 (NQPGVYRMYD…IKRYQPRYNV (79 aa)). Residues 204–239 (SQVIDALVARMEEASRALRFEEAARLRDQIQAVRRV) form the UVR domain.

Belongs to the UvrC family. As to quaternary structure, interacts with UvrB in an incision complex.

The protein localises to the cytoplasm. Its function is as follows. The UvrABC repair system catalyzes the recognition and processing of DNA lesions. UvrC both incises the 5' and 3' sides of the lesion. The N-terminal half is responsible for the 3' incision and the C-terminal half is responsible for the 5' incision. In Edwardsiella ictaluri (strain 93-146), this protein is UvrABC system protein C.